The primary structure comprises 143 residues: MFKLSGEDKANVKAVWDHVKGHEDAFGHEALGRMFTGIEQTHTYFPDKDLNEGSFALHSHGKKVMGALSNAVAHIDDLEATLVKLSDKHAHDLMVDPAEFPRLAEDILVVLGFHLPAKFTYAVQCSIDKFLHVTMRLCISKYR.

In terms of domain architecture, Globin spans 3-143 (KLSGEDKANV…TMRLCISKYR (141 aa)). Residue histidine 60 participates in O2 binding. Position 89 (histidine 89) interacts with heme b.

It belongs to the globin family. Heterotetramer of two alpha chains and two beta chains. As to expression, red blood cells.

In terms of biological role, involved in oxygen transport from the lung to the various peripheral tissues. The polypeptide is Hemoglobin subunit alpha (HBA) (Ambystoma mexicanum (Axolotl)).